The sequence spans 89 residues: HssA/B-like protein 22 (89 aa).

It belongs to the hssA/B family.

The sequence is that of HssA/B-like protein 22 (hssl22) from Dictyostelium discoideum (Social amoeba).